A 258-amino-acid chain; its full sequence is Type III pantothenate kinase (258 aa).

Position 6–13 (6–13 (DVGNTNIV)) interacts with ATP. Residues Y100 and 107–110 (GADR) contribute to the substrate site. D109 serves as the catalytic Proton acceptor. D129 lines the K(+) pocket. Position 132 (T132) interacts with ATP. Residue T184 participates in substrate binding.

It belongs to the type III pantothenate kinase family. As to quaternary structure, homodimer. Requires NH4(+) as cofactor. K(+) serves as cofactor.

It is found in the cytoplasm. It carries out the reaction (R)-pantothenate + ATP = (R)-4'-phosphopantothenate + ADP + H(+). Its pathway is cofactor biosynthesis; coenzyme A biosynthesis; CoA from (R)-pantothenate: step 1/5. Functionally, catalyzes the phosphorylation of pantothenate (Pan), the first step in CoA biosynthesis. The protein is Type III pantothenate kinase of Clostridium botulinum (strain Kyoto / Type A2).